Here is an 806-residue protein sequence, read N- to C-terminus: Leucine--tRNA ligase (806 aa).

The 'HIGH' region motif lies at 40 to 51; it reads PYPSGKGLHVGH. Positions 580 to 584 match the 'KMSKS' region motif; that stretch reads KMSKS. ATP is bound at residue lysine 583.

The protein belongs to the class-I aminoacyl-tRNA synthetase family.

It localises to the cytoplasm. It carries out the reaction tRNA(Leu) + L-leucine + ATP = L-leucyl-tRNA(Leu) + AMP + diphosphate. This is Leucine--tRNA ligase from Ureaplasma parvum serovar 3 (strain ATCC 27815 / 27 / NCTC 11736).